We begin with the raw amino-acid sequence, 919 residues long: Transcriptional regulatory protein EDS1 (919 aa).

The tract at residues 1–54 is disordered; sequence MSHHVPNLYGTPIRDPHEHKRNSASMGEVNQSVSSRNCERGSEKGTKQRKKASR. Residues 23–36 show a composition bias toward polar residues; it reads SASMGEVNQSVSSR. Basic and acidic residues predominate over residues 37 to 46; it reads NCERGSEKGT. The segment at residues 56–85 is a DNA-binding region (zn(2)-C6 fungal-type); the sequence is CDQCRRKRIKCRFDKHTGVCQGCLEVGEKC. The tract at residues 297 to 338 is disordered; that stretch reads AGCPNKKLGTDGRSDKWDKNSTWKPVYRSSNPSHPSTEKNVS. The span at 304-317 shows a compositional bias: basic and acidic residues; that stretch reads LGTDGRSDKWDKNS. Positions 318-338 are enriched in polar residues; the sequence is TWKPVYRSSNPSHPSTEKNVS.

As to quaternary structure, binds DNA in a sequence-specific manner.

It localises to the nucleus. The chain is Transcriptional regulatory protein EDS1 (EDS1) from Saccharomyces cerevisiae (strain Lalvin EC1118 / Prise de mousse) (Baker's yeast).